The following is a 143-amino-acid chain: Small ribosomal subunit protein uS12 (143 aa).

A compositionally biased stretch (basic residues) spans 1-15 (MGKCRGLRTARKLRD). The segment at 1–27 (MGKCRGLRTARKLRDHRREQKWHDKQY) is disordered. The segment covering 16–27 (HRREQKWHDKQY) has biased composition (basic and acidic residues).

Belongs to the universal ribosomal protein uS12 family. As to quaternary structure, component of the 40S small ribosomal subunit.

The protein localises to the cytoplasm. It localises to the cytosol. It is found in the rough endoplasmic reticulum. The sequence is that of Small ribosomal subunit protein uS12 (rps23) from Ictalurus punctatus (Channel catfish).